We begin with the raw amino-acid sequence, 676 residues long: Methionine--tRNA ligase (676 aa).

The short motif at 15–25 (PYANGPIHLGH) is the 'HIGH' region element. Residues cysteine 146, cysteine 149, cysteine 159, and cysteine 162 each contribute to the Zn(2+) site. The 'KMSKS' region signature appears at 332–336 (KMSKS). Residue lysine 335 participates in ATP binding. The tRNA-binding domain maps to 575–676 (DFAKIDLRIA…EGAQPGMRVK (102 aa)).

Belongs to the class-I aminoacyl-tRNA synthetase family. MetG type 1 subfamily. In terms of assembly, homodimer. The cofactor is Zn(2+).

The protein localises to the cytoplasm. It catalyses the reaction tRNA(Met) + L-methionine + ATP = L-methionyl-tRNA(Met) + AMP + diphosphate. Is required not only for elongation of protein synthesis but also for the initiation of all mRNA translation through initiator tRNA(fMet) aminoacylation. The sequence is that of Methionine--tRNA ligase from Shewanella sp. (strain MR-4).